A 394-amino-acid chain; its full sequence is Elongation factor Tu (394 aa).

Residues Lys-10–Arg-205 enclose the tr-type G domain. The G1 stretch occupies residues Gly-19–Thr-26. Gly-19 to Thr-26 contributes to the GTP binding site. Mg(2+) is bound at residue Thr-26. A G2 region spans residues Gly-60–Asn-64. Residues Asp-81–Gly-84 form a G3 region. GTP-binding positions include Asp-81–His-85 and Asn-136–Asp-139. The G4 stretch occupies residues Asn-136 to Asp-139. The G5 stretch occupies residues Ser-174 to Leu-176.

This sequence belongs to the TRAFAC class translation factor GTPase superfamily. Classic translation factor GTPase family. EF-Tu/EF-1A subfamily. In terms of assembly, monomer.

The protein resides in the cytoplasm. It carries out the reaction GTP + H2O = GDP + phosphate + H(+). GTP hydrolase that promotes the GTP-dependent binding of aminoacyl-tRNA to the A-site of ribosomes during protein biosynthesis. The sequence is that of Elongation factor Tu from Bacteroides thetaiotaomicron (strain ATCC 29148 / DSM 2079 / JCM 5827 / CCUG 10774 / NCTC 10582 / VPI-5482 / E50).